Here is a 126-residue protein sequence, read N- to C-terminus: SPbeta prophage-derived uncharacterized protein YorC (126 aa).

The protein is SPbeta prophage-derived uncharacterized protein YorC (yorC) of Bacillus subtilis (strain 168).